A 312-amino-acid chain; its full sequence is Mycothiol acetyltransferase (312 aa).

2 N-acetyltransferase domains span residues 8–136 (PIIR…LPMP) and 149–301 (LRLD…HQDH). Residue E38 coordinates 1D-myo-inositol 2-(L-cysteinylamino)-2-deoxy-alpha-D-glucopyranoside. Acetyl-CoA-binding positions include 77–79 (LMV) and 85–90 (RQGIAT). 3 residues coordinate 1D-myo-inositol 2-(L-cysteinylamino)-2-deoxy-alpha-D-glucopyranoside: E175, K215, and E226. Acetyl-CoA-binding positions include 230–232 (LGV) and 237–243 (EGKGVGR). Y264 is a binding site for 1D-myo-inositol 2-(L-cysteinylamino)-2-deoxy-alpha-D-glucopyranoside. An acetyl-CoA-binding site is contributed by 269 to 274 (NERVVH). A disordered region spans residues 292–312 (PAKPARHQDHGRQSSPQERDA). Over residues 297-312 (RHQDHGRQSSPQERDA) the composition is skewed to basic and acidic residues.

The protein belongs to the acetyltransferase family. MshD subfamily. As to quaternary structure, monomer.

It carries out the reaction 1D-myo-inositol 2-(L-cysteinylamino)-2-deoxy-alpha-D-glucopyranoside + acetyl-CoA = mycothiol + CoA + H(+). In terms of biological role, catalyzes the transfer of acetyl from acetyl-CoA to desacetylmycothiol (Cys-GlcN-Ins) to form mycothiol. The protein is Mycothiol acetyltransferase of Propionibacterium freudenreichii subsp. shermanii (strain ATCC 9614 / DSM 4902 / CIP 103027 / NCIMB 8099 / CIRM-BIA1).